The chain runs to 261 residues: Carnitinyl-CoA dehydratase (261 aa).

The Nucleophile role is filled by glutamate 111. Glutamate 131 functions as the Proton acceptor in the catalytic mechanism.

It belongs to the enoyl-CoA hydratase/isomerase family.

The catalysed reaction is (R)-carnitinyl-CoA = crotonobetainyl-CoA + H2O. Its pathway is amine and polyamine metabolism; carnitine metabolism. Its function is as follows. Catalyzes the reversible dehydration of L-carnitinyl-CoA to crotonobetainyl-CoA. The chain is Carnitinyl-CoA dehydratase from Salmonella typhi.